Consider the following 650-residue polypeptide: Chaperone protein HtpG (650 aa).

Residues 1–356 are a; substrate-binding; the sequence is MSTRVETLEF…THDLSLNISR (356 aa). A disordered region spans residues 222 to 245; it reads AKDRDSNDDGTAESGAGAENAGDR. A b region spans residues 357–572; that stretch reads EILQQDRRIQ…TFDMTPALEK (216 aa). The interval 573–650 is c; sequence MYRAMGHEMP…LLAERLAEAL (78 aa).

Belongs to the heat shock protein 90 family. As to quaternary structure, homodimer.

It is found in the cytoplasm. Functionally, molecular chaperone. Has ATPase activity. The sequence is that of Chaperone protein HtpG from Frankia casuarinae (strain DSM 45818 / CECT 9043 / HFP020203 / CcI3).